Reading from the N-terminus, the 216-residue chain is U1 small nuclear ribonucleoprotein C (216 aa).

Residues 4-36 (FFCDYCDVYLTHDSMSVRKAHNSGRNHLRNVVD) form a Matrin-type zinc finger. Disordered stretches follow at residues 70 to 89 (PQNQ…PGAG) and 125 to 216 (PGGI…ADKR). Composition is skewed to pro residues over residues 140–149 (PPMPPFPGMP) and 157–204 (GVPP…PPFG).

The protein belongs to the U1 small nuclear ribonucleoprotein C family. As to quaternary structure, U1 snRNP is composed of the 7 core Sm proteins B/B', D1, D2, D3, E, F and G that assemble in a heptameric protein ring on the Sm site of the small nuclear RNA to form the core snRNP, and at least 3 U1 snRNP-specific proteins U1-70K, U1-A and U1-C. U1-C interacts with U1 snRNA and the 5' splice-site region of the pre-mRNA.

The protein localises to the nucleus. In terms of biological role, component of the spliceosomal U1 snRNP, which is essential for recognition of the pre-mRNA 5' splice-site and the subsequent assembly of the spliceosome. U1-C is directly involved in initial 5' splice-site recognition for both constitutive and regulated alternative splicing. The interaction with the 5' splice-site seems to precede base-pairing between the pre-mRNA and the U1 snRNA. Stimulates commitment or early (E) complex formation by stabilizing the base pairing of the 5' end of the U1 snRNA and the 5' splice-site region. The polypeptide is U1 small nuclear ribonucleoprotein C (Neurospora crassa (strain ATCC 24698 / 74-OR23-1A / CBS 708.71 / DSM 1257 / FGSC 987)).